The following is a 780-amino-acid chain: GATOR2 complex protein WDR24 (780 aa).

6 WD repeats span residues 67 to 107 (SLNF…RNKQ), 113 to 153 (EHKR…SVST), 156 to 196 (GQSE…RCER), 200 to 240 (AHNG…AKEI), 244 to 286 (QTIA…IPFA), and 290 to 333 (EHKD…IDRA). Residues 708–730 (NCSNCKRPMSNKGWICDRCRQCA) form a C4-type zinc finger. Residues C709, C712, C723, C726, C733, C736, C747, C750, H752, H755, H758, C769, C773, H775, and C777 each contribute to the Zn(2+) site. An RING-type; atypical zinc finger spans residues 731-780 (SMCAVCHHVVKGLFVWCQGCCHGGHLQHIMNWMQNNCYCPAGCGHVCEYS).

It belongs to the WD repeat WDR24 family. As to quaternary structure, component of the GATOR2 subcomplex, composed of MIOS, SEC13, SEH1L, WDR24 and WDR59. The GATOR2 complex interacts with CASTOR1 and CASTOR2; the interaction is negatively regulated by arginine. The GATOR2 complex interacts with SESN1, SESN2 and SESN3; the interaction is negatively regulated by amino acids.

The protein resides in the lysosome membrane. It carries out the reaction S-ubiquitinyl-[E2 ubiquitin-conjugating enzyme]-L-cysteine + [acceptor protein]-L-lysine = [E2 ubiquitin-conjugating enzyme]-L-cysteine + N(6)-ubiquitinyl-[acceptor protein]-L-lysine.. The protein operates within protein modification; protein ubiquitination. The GATOR2 complex is negatively regulated by the upstream amino acid sensors CASTOR1 and SESN2, which sequester the GATOR2 complex in absence of amino acids. In the presence of abundant amino acids, GATOR2 is released from CASTOR1 and SESN2 and activated. In terms of biological role, catalytic component of the GATOR2 complex, a multiprotein complex that acts as an activator of the amino acid-sensing branch of the mTORC1 signaling pathway. The GATOR2 complex indirectly activates mTORC1 through the inhibition of the GATOR1 subcomplex. GATOR2 probably acts as an E3 ubiquitin-protein ligase toward GATOR1. In the presence of abundant amino acids, the GATOR2 complex mediates ubiquitination of the NPRL2 core component of the GATOR1 complex, leading to GATOR1 inactivation. In the absence of amino acids, GATOR2 is inhibited, activating the GATOR1 complex. In addition to its role in regulation of the mTORC1 complex, promotes the acidification of lysosomes and facilitates autophagic flux. Within the GATOR2 complex, WDR24 constitutes the catalytic subunit that mediates 'Lys-6'-linked ubiquitination of NPRL2. This is GATOR2 complex protein WDR24 from Xenopus laevis (African clawed frog).